A 90-amino-acid polypeptide reads, in one-letter code: U7-theraphotoxin-Hhn1e (90 aa).

Positions 1 to 19 (MKTAIFTVVLALAVFAVLS) are cleaved as a signal peptide. The propeptide occupies 20–50 (FGWEANEKALSEEFTELIHEKEAASETEARE). 3 disulfide bridges follow: cysteine 51/cysteine 65, cysteine 58/cysteine 70, and cysteine 64/cysteine 81.

It belongs to the neurotoxin 10 (Hwtx-1) family. 13 (Hntx-13) subfamily. In terms of tissue distribution, expressed by the venom gland.

The protein localises to the secreted. Functionally, ion channel inhibitor. This is U7-theraphotoxin-Hhn1e from Cyriopagopus hainanus (Chinese bird spider).